The chain runs to 352 residues: Selenide, water dikinase (352 aa).

C23 is a catalytic residue. Residues K26 and 54–56 (SRD) each bind ATP. D57 lines the Mg(2+) pocket. ATP-binding positions include D74, D97, and 145-147 (GHS). Residue D97 coordinates Mg(2+). A Mg(2+)-binding site is contributed by D233.

The protein belongs to the selenophosphate synthase 1 family. Class I subfamily. Homodimer. Requires Mg(2+) as cofactor.

It carries out the reaction hydrogenselenide + ATP + H2O = selenophosphate + AMP + phosphate + 2 H(+). Functionally, synthesizes selenophosphate from selenide and ATP. The polypeptide is Selenide, water dikinase (Shewanella putrefaciens (strain CN-32 / ATCC BAA-453)).